The chain runs to 240 residues: MNAEKSPVNHNVDHKEIAKFEAVASRWWDLEGEFKPLHRINPLRLGYIAERAGGLFGKKVLDVGCGGGILAESMAREGATVTGLDMGFEPLQVAKLHALESGIQVDYVQETVEEHAAKHAGQYDVVTCMEMLEHVPDPQSVVRACAQLVKPGGDVFFSTLNRNGKSWLMAVVGAEYILRMVPKGTHDVKKFIKPAELLGWVDQTSLKERHMTGLHYNPITNTFKLGPGVDVNYMLHTQNK.

Residues Arg-44, Gly-64, Asp-85, and Met-129 each contribute to the S-adenosyl-L-methionine site.

Belongs to the methyltransferase superfamily. UbiG/COQ3 family.

The enzyme catalyses a 3-demethylubiquinol + S-adenosyl-L-methionine = a ubiquinol + S-adenosyl-L-homocysteine + H(+). The catalysed reaction is a 3-(all-trans-polyprenyl)benzene-1,2-diol + S-adenosyl-L-methionine = a 2-methoxy-6-(all-trans-polyprenyl)phenol + S-adenosyl-L-homocysteine + H(+). It functions in the pathway cofactor biosynthesis; ubiquinone biosynthesis. O-methyltransferase that catalyzes the 2 O-methylation steps in the ubiquinone biosynthetic pathway. The protein is Ubiquinone biosynthesis O-methyltransferase of Escherichia coli O6:K15:H31 (strain 536 / UPEC).